We begin with the raw amino-acid sequence, 395 residues long: S-adenosylmethionine synthase (395 aa).

Residue His15 participates in ATP binding. Asp17 serves as a coordination point for Mg(2+). A K(+)-binding site is contributed by Glu43. Residues Glu56 and Gln99 each coordinate L-methionine. The segment at 99–109 is flexible loop; that stretch reads QSPDIAMGVDE. Residues 173-175, 239-240, Asp248, 254-255, Ala271, and Lys275 each bind ATP; these read DGK, RF, and RK. Asp248 contacts L-methionine. Residue Lys279 participates in L-methionine binding.

It belongs to the AdoMet synthase family. As to quaternary structure, homotetramer; dimer of dimers. Mg(2+) serves as cofactor. Requires K(+) as cofactor.

The protein localises to the cytoplasm. It carries out the reaction L-methionine + ATP + H2O = S-adenosyl-L-methionine + phosphate + diphosphate. Its pathway is amino-acid biosynthesis; S-adenosyl-L-methionine biosynthesis; S-adenosyl-L-methionine from L-methionine: step 1/1. Its function is as follows. Catalyzes the formation of S-adenosylmethionine (AdoMet) from methionine and ATP. The overall synthetic reaction is composed of two sequential steps, AdoMet formation and the subsequent tripolyphosphate hydrolysis which occurs prior to release of AdoMet from the enzyme. The sequence is that of S-adenosylmethionine synthase from Desulforudis audaxviator (strain MP104C).